Here is a 408-residue protein sequence, read N- to C-terminus: Glutamate N-acetyltransferase (408 aa).

Residues Thr150, Lys176, Thr189, Glu271, Asn403, and Thr408 each coordinate substrate. Thr189 (nucleophile) is an active-site residue.

It belongs to the ArgJ family. As to quaternary structure, heterotetramer of two alpha and two beta chains.

The protein resides in the cytoplasm. The catalysed reaction is N(2)-acetyl-L-ornithine + L-glutamate = N-acetyl-L-glutamate + L-ornithine. The protein operates within amino-acid biosynthesis; L-arginine biosynthesis; L-ornithine and N-acetyl-L-glutamate from L-glutamate and N(2)-acetyl-L-ornithine (cyclic): step 1/1. Its function is as follows. Catalyzes the transfer of the acetyl group from N(2)-acetylornithine to glutamate, forming N-acetylglutamate and L-ornithine. This is Glutamate N-acetyltransferase from Methanococcus maripaludis (strain C7 / ATCC BAA-1331).